The primary structure comprises 636 residues: DNA gyrase subunit B (636 aa).

The Toprim domain maps to 421 to 535; sequence TELFIVEGDS…QGRVYIALPP (115 aa). Residues E427, D500, and D502 each coordinate Mg(2+).

The protein belongs to the type II topoisomerase GyrB family. Heterotetramer, composed of two GyrA and two GyrB chains. In the heterotetramer, GyrA contains the active site tyrosine that forms a transient covalent intermediate with DNA, while GyrB binds cofactors and catalyzes ATP hydrolysis. The cofactor is Mg(2+). Mn(2+) serves as cofactor. Ca(2+) is required as a cofactor.

The protein localises to the cytoplasm. It catalyses the reaction ATP-dependent breakage, passage and rejoining of double-stranded DNA.. Functionally, a type II topoisomerase that negatively supercoils closed circular double-stranded (ds) DNA in an ATP-dependent manner to modulate DNA topology and maintain chromosomes in an underwound state. Negative supercoiling favors strand separation, and DNA replication, transcription, recombination and repair, all of which involve strand separation. Also able to catalyze the interconversion of other topological isomers of dsDNA rings, including catenanes and knotted rings. Type II topoisomerases break and join 2 DNA strands simultaneously in an ATP-dependent manner. The sequence is that of DNA gyrase subunit B from Thermotoga maritima (strain ATCC 43589 / DSM 3109 / JCM 10099 / NBRC 100826 / MSB8).